The sequence spans 719 residues: Polyphosphate kinase (719 aa).

Asn-47 serves as a coordination point for ATP. Mg(2+) contacts are provided by Arg-377 and Arg-407. His-437 acts as the Phosphohistidine intermediate in catalysis. Residues Tyr-470, Arg-566, and His-594 each coordinate ATP.

Belongs to the polyphosphate kinase 1 (PPK1) family. Requires Mg(2+) as cofactor. In terms of processing, an intermediate of this reaction is the autophosphorylated ppk in which a phosphate is covalently linked to a histidine residue through a N-P bond.

It carries out the reaction [phosphate](n) + ATP = [phosphate](n+1) + ADP. In terms of biological role, catalyzes the reversible transfer of the terminal phosphate of ATP to form a long-chain polyphosphate (polyP). The protein is Polyphosphate kinase of Exiguobacterium sibiricum (strain DSM 17290 / CCUG 55495 / CIP 109462 / JCM 13490 / 255-15).